The primary structure comprises 353 residues: DNA integrity scanning protein DisA (353 aa).

The DAC domain occupies 6–144 (DKELMNILKI…GGIKYVLRDS (139 aa)). Residues Gly-73, Leu-91, and 104-108 (TRHRT) contribute to the ATP site.

It belongs to the DisA family. Homooctamer. Requires Mg(2+) as cofactor.

It catalyses the reaction 2 ATP = 3',3'-c-di-AMP + 2 diphosphate. Participates in a DNA-damage check-point that is active prior to asymmetric division when DNA is damaged. DisA forms globular foci that rapidly scan along the chromosomes during sporulation, searching for lesions. When a lesion is present, DisA pauses at the lesion site. This triggers a cellular response that culminates in a temporary block in sporulation initiation. Its function is as follows. Also has diadenylate cyclase activity, catalyzing the condensation of 2 ATP molecules into cyclic di-AMP (c-di-AMP). c-di-AMP acts as a signaling molecule that couples DNA integrity with progression of sporulation. The rise in c-di-AMP level generated by DisA while scanning the chromosome, operates as a positive signal that advances sporulation; upon encountering a lesion, the DisA focus arrests at the damaged site and halts c-di-AMP synthesis. In Clostridium botulinum (strain Loch Maree / Type A3), this protein is DNA integrity scanning protein DisA.